Reading from the N-terminus, the 132-residue chain is ATP synthase epsilon chain (132 aa).

The protein belongs to the ATPase epsilon chain family. F-type ATPases have 2 components, CF(1) - the catalytic core - and CF(0) - the membrane proton channel. CF(1) has five subunits: alpha(3), beta(3), gamma(1), delta(1), epsilon(1). CF(0) has three main subunits: a, b and c.

The protein localises to the cell membrane. In terms of biological role, produces ATP from ADP in the presence of a proton gradient across the membrane. The polypeptide is ATP synthase epsilon chain (atpC) (Geobacillus stearothermophilus (Bacillus stearothermophilus)).